The primary structure comprises 591 residues: Aspartate--tRNA ligase (591 aa).

L-aspartate is bound at residue Glu176. An aspartate region spans residues 200–203 (QILK). Arg222 serves as a coordination point for L-aspartate. Residues 222–224 (RDE) and Gln231 contribute to the ATP site. Position 450 (His450) interacts with L-aspartate. Glu484 lines the ATP pocket. Arg491 is an L-aspartate binding site. 536-539 (GLDR) is an ATP binding site.

This sequence belongs to the class-II aminoacyl-tRNA synthetase family. Type 1 subfamily. Homodimer.

It is found in the cytoplasm. It carries out the reaction tRNA(Asp) + L-aspartate + ATP = L-aspartyl-tRNA(Asp) + AMP + diphosphate. Its function is as follows. Catalyzes the attachment of L-aspartate to tRNA(Asp) in a two-step reaction: L-aspartate is first activated by ATP to form Asp-AMP and then transferred to the acceptor end of tRNA(Asp). This Listeria monocytogenes serotype 4a (strain HCC23) protein is Aspartate--tRNA ligase.